A 401-amino-acid chain; its full sequence is MAEGSGIDRKADERMEFSTSKEVTVHPTFESMSLKENLLRGIYAYGYESPSAVQSRAIVQVCKGRDTIAQAQSGTGKTATFSISMLQVIDTAVRETQALVLSPTRELATQIQSVVMALGDYMNVQCHACIGGTNVGEDIRKLDYGQHIVSGTPGRVADMIRRRHLRTRHIKMLVLDEADELLNKGFREQIYDVYRYLPPATQVVVVSATLPYDVLDMTTKFMTDPVRILVKRDELTLEGLKQYFIAVEKEDWKFDTLCDLYDTLTITQAVIFCNTRRKVDWLTDKMREANFTVSSMHGDMPQKERDSIMQDFRQGNSRVLISTDVWARGIDVQQVSLVINYDLPSNRENYIHRIGRSGRFGRKGVAINFVTTEDVRILRDIELYYSTQIDEMPMNVADLIA.

A Q motif motif is present at residues 27-55 (PTFESMSLKENLLRGIYAYGYESPSAVQS). The Helicase ATP-binding domain maps to 58–228 (IVQVCKGRDT…TKFMTDPVRI (171 aa)). ATP is bound at residue 71-78 (AQSGTGKT). Residues 176 to 179 (DEAD) carry the DEAD box motif. Residues 239-400 (GLKQYFIAVE…EMPMNVADLI (162 aa)) enclose the Helicase C-terminal domain.

The protein belongs to the DEAD box helicase family. DDX48/FAL1 subfamily.

It is found in the nucleus. Its subcellular location is the nucleolus. The catalysed reaction is ATP + H2O = ADP + phosphate + H(+). ATP-dependent RNA helicase involved in 40S ribosomal subunit biogenesis. Required for the processing and cleavage of 35S pre-rRNA at sites A0, A1, and A2, leading to mature 18S rRNA. The polypeptide is ATP-dependent RNA helicase FAL1 (FAL1) (Gibberella zeae (strain ATCC MYA-4620 / CBS 123657 / FGSC 9075 / NRRL 31084 / PH-1) (Wheat head blight fungus)).